The chain runs to 180 residues: Protein sll1483 (180 aa).

The first 26 residues, 1-26 (MKTAARIVAFTALTGFALGMPTVAMA), serve as a signal peptide directing secretion. The FAS1 domain occupies 45–176 (AMTIVEVAAG…GVIHVIDQVI (132 aa)).

The sequence is that of Protein sll1483 from Synechocystis sp. (strain ATCC 27184 / PCC 6803 / Kazusa).